The following is a 319-amino-acid chain: Formimidoylglutamase (319 aa).

N127, D150, H152, D154, D242, and D244 together coordinate Mn(2+).

The protein belongs to the arginase family. Mn(2+) is required as a cofactor.

It catalyses the reaction N-formimidoyl-L-glutamate + H2O = formamide + L-glutamate. It participates in amino-acid degradation; L-histidine degradation into L-glutamate; L-glutamate from N-formimidoyl-L-glutamate (hydrolase route): step 1/1. Its function is as follows. Catalyzes the conversion of N-formimidoyl-L-glutamate to L-glutamate and formamide. This Bacillus subtilis (strain 168) protein is Formimidoylglutamase.